Reading from the N-terminus, the 50-residue chain is uncharacterized protein (50 aa).

This is an uncharacterized protein from Treponema pallidum (strain Nichols).